A 331-amino-acid chain; its full sequence is GTP 3',8-cyclase (331 aa).

A Radical SAM core domain is found at 1–231 (MNAVDYLRIS…DGQVQGNGPA (231 aa)). Residue arginine 8 participates in GTP binding. Positions 15 and 19 each coordinate [4Fe-4S] cluster. An S-adenosyl-L-methionine-binding site is contributed by tyrosine 21. [4Fe-4S] cluster is bound at residue cysteine 22. Arginine 60 provides a ligand contact to GTP. Glycine 64 contacts S-adenosyl-L-methionine. Threonine 91 contacts GTP. Serine 115 contributes to the S-adenosyl-L-methionine binding site. Residue lysine 157 participates in GTP binding. Methionine 191 contributes to the S-adenosyl-L-methionine binding site. Residues cysteine 254 and cysteine 257 each contribute to the [4Fe-4S] cluster site. A GTP-binding site is contributed by 259–261 (RMR). Cysteine 271 serves as a coordination point for [4Fe-4S] cluster.

Belongs to the radical SAM superfamily. MoaA family. Monomer and homodimer. The cofactor is [4Fe-4S] cluster.

It catalyses the reaction GTP + AH2 + S-adenosyl-L-methionine = (8S)-3',8-cyclo-7,8-dihydroguanosine 5'-triphosphate + 5'-deoxyadenosine + L-methionine + A + H(+). The protein operates within cofactor biosynthesis; molybdopterin biosynthesis. In terms of biological role, catalyzes the cyclization of GTP to (8S)-3',8-cyclo-7,8-dihydroguanosine 5'-triphosphate. The polypeptide is GTP 3',8-cyclase (Acaryochloris marina (strain MBIC 11017)).